A 432-amino-acid polypeptide reads, in one-letter code: Putative D-alanyl-D-alanine carboxypeptidase (432 aa).

Residues 7–25 (ATVLLTFSLSAFAVEYPVL) form a helical; Signal-anchor membrane-spanning segment.

It belongs to the peptidase S12 family. YfeW subfamily.

The protein resides in the cell inner membrane. It carries out the reaction Preferential cleavage: (Ac)2-L-Lys-D-Ala-|-D-Ala. Also transpeptidation of peptidyl-alanyl moieties that are N-acyl substituents of D-alanine.. The protein is Putative D-alanyl-D-alanine carboxypeptidase of Salmonella choleraesuis (strain SC-B67).